We begin with the raw amino-acid sequence, 262 residues long: Carbonic anhydrase 13 (262 aa).

In terms of domain architecture, Alpha-carbonic anhydrase spans 4–261; that stretch reads LSWGYGEHNG…LKGRRVRASF (258 aa). His65 serves as the catalytic Proton donor/acceptor. His95, His97, and His120 together coordinate Zn(2+). 200 to 201 serves as a coordination point for substrate; sequence TV.

It belongs to the alpha-carbonic anhydrase family. It depends on Zn(2+) as a cofactor. In terms of tissue distribution, expressed in spleen, lung, kidney, heart, brain, skeletal muscle and testis.

The enzyme catalyses hydrogencarbonate + H(+) = CO2 + H2O. Inhibited by coumarins, sulfonamide derivatives such as acetazolamide (AZA) and Foscarnet (phosphonoformate trisodium salt). Its function is as follows. Reversible hydration of carbon dioxide. This Mus musculus (Mouse) protein is Carbonic anhydrase 13 (Ca13).